The primary structure comprises 443 residues: MDRLGPFSNDPSDKPPCRGCSSYLMEPYIKCAECGPPPFFLCLQCFTRGFEYKKHQSDHTYEIMTSDFPVLDPSWTAQEEMALLEAVMDCGFGNWQDVANQMCTKTKEECEKHYMKHFINNPLFASTLLNLKQAEEAKTADTAIPFHSTDDPPRPTFDSLLSRDMAGYMPARADFIEEFDNYAEWDLRDIDFVEDDSDILHALKMAVVDIYHSRLKERQRRKKIIRDHGLINLRKFQLMERRYPKEVQDLYETMRRFARIVGPVEHDKFIESHALEFELRREIKRLQEYRTAGITNFCSARTYDHLKKTREEERLKRTMLSEVLQYIQDSSACQQWLRRQADIDSGLSPSIPMASNSGRRSAPPLNLTGLPGTEKLNEKEKELCQMVRLVPGAYLEYKSALLNECNKQGGLRLAQARALIKIDVNKTRKIYDFLIREGYITKG.

At Pro-6 the chain carries Phosphoserine; in variant Ser-6. The segment at 12 to 69 adopts a ZZ-type zinc-finger fold; it reads SDKPPCRGCSSYLMEPYIKCAECGPPPFFLCLQCFTRGFEYKKHQSDHTYEIMTSDFP. Zn(2+) contacts are provided by Cys-17, Cys-20, Cys-31, Cys-34, Cys-42, Cys-45, His-55, and His-59. One can recognise an SANT domain in the interval 70 to 122; that stretch reads VLDPSWTAQEEMALLEAVMDCGFGNWQDVANQMCTKTKEECEKHYMKHFINNP. Glycyl lysine isopeptide (Lys-Gly) (interchain with G-Cter in SUMO2) cross-links involve residues Lys-132 and Lys-138. Residues 348-372 are disordered; that stretch reads SPSIPMASNSGRRSAPPLNLTGLPG. One can recognise an SWIRM domain in the interval 356–443; it reads NSGRRSAPPL…LIREGYITKG (88 aa). A DNA-binding region spans residues 426–435; that stretch reads KTRKIYDFLI.

Interacts with GCN5 and NR3C1. Associated with the P/CAF protein in the PCAF complex. Component of the PCAF complex, at least composed of TADA2L/ADA2, TADA3L/ADA3, TAF5L/PAF65-beta, TAF6L/PAF65-alpha, TAF10/TAFII30, TAF12/TAFII20, TAF9/TAFII31 and TRRAP. Component of the ADA2A-containing complex (ATAC), composed of KAT14, KAT2A, TADA2L, TADA3L, ZZ3, MBIP, WDR5, YEATS2, CCDC101 and DR1. Interacts with CCDC134. Expressed in all tissues, but most abundantly in testis.

Its subcellular location is the nucleus. The protein resides in the chromosome. Functionally, component of the ATAC complex, a complex with histone acetyltransferase activity on histones H3 and H4. Required for the function of some acidic activation domains, which activate transcription from a distant site. Binds double-stranded DNA. Binds dinucleosomes, probably at the linker region between neighboring nucleosomes. Plays a role in chromatin remodeling. May promote TP53/p53 'Lys-321' acetylation, leading to reduced TP53 stability and transcriptional activity. May also promote XRCC6 acetylation thus facilitating cell apoptosis in response to DNA damage. The sequence is that of Transcriptional adapter 2-alpha (TADA2A) from Homo sapiens (Human).